A 199-amino-acid chain; its full sequence is Early activation antigen CD69 (199 aa).

The segment covering 1 to 14 has biased composition (polar residues); that stretch reads MDSENCSITENSSS. The disordered stretch occupies residues 1-20; that stretch reads MDSENCSITENSSSHLERGQ. Residues 1 to 40 are Cytoplasmic-facing; it reads MDSENCSITENSSSHLERGQKDHGTSIHFEKHHEGSIQVS. A helical; Signal-anchor for type II membrane protein membrane pass occupies residues 41–61; that stretch reads IPWAVLIVVLITSLIIALIAL. Over 62–199 the chain is Extracellular; that stretch reads NVGKYNCPGL…FHWVCSKPSR (138 aa). Intrachain disulfides connect C85–C96, C113–C194, and C173–C186. Positions 92–195 constitute a C-type lectin domain; sequence YKRTCYFFST…CEANFHWVCS (104 aa). N-linked (GlcNAc...) asparagine glycosylation is found at N150, N166, and N180.

In terms of assembly, homodimer; disulfide-linked. Interacts with S100A8 and S100A9. Interacts with galactin-1/LGALS1. Interacts with S1PR1; this interaction mediates S1PR1 degradation. Interacts with JAK3 and STAT5. Post-translationally, constitutive Ser/Thr phosphorylation in both mature thymocytes and activated T-lymphocytes. As to expression, expressed on the surface of activated T-cells, B-cells, natural killer cells, neutrophils and platelets. Present also in eosinophils.

It localises to the cell membrane. In terms of biological role, transmembrane protein expressed mainly on T-cells resident in mucosa that plays an essential role in immune cell homeostasis. Rapidly expressed on the surface of platelets, T-lymphocytes and NK cells upon activation by various stimuli, such as antigen recognition or cytokine signaling, stimulates different signaling pathways in different cell types. Negatively regulates Th17 cell differentiation through its carbohydrate dependent interaction with galectin-1/LGALS1 present on immature dendritic cells. Association of CD69 cytoplasmic tail with the JAK3/STAT5 signaling pathway regulates the transcription of RORgamma/RORC and, consequently, differentiation toward the Th17 lineage. Also acts via the S100A8/S100A9 complex present on peripheral blood mononuclear cells to promote the conversion of naive CD4 T-cells into regulatory T-cells. Acts as an oxidized low-density lipoprotein (oxLDL) receptor in CD4 T-lymphocytes and negatively regulates the inflammatory response by inducing the expression of PDCD1 through the activation of NFAT. Participates in adipose tissue-derived mesenchymal stem cells (ASCs)-mediated protection against P.aeruginosa infection. Mechanistically, specifically recognizes P.aeruginosa to promote ERK1 activation, followed by granulocyte-macrophage colony-stimulating factor (GM-CSF) and other inflammatory cytokines secretion. In eosinophils, induces IL-10 production through the ERK1/2 pathway. Negatively regulates the chemotactic responses of effector lymphocytes and dendritic cells (DCs) to sphingosine 1 phosphate/S1P by acting as a S1PR1 receptor agonist and facilitating the internalization and degradation of the receptor. The polypeptide is Early activation antigen CD69 (Cd69) (Mus musculus (Mouse)).